Reading from the N-terminus, the 130-residue chain is DNA-directed RNA polymerase subunit omega (130 aa).

The disordered stretch occupies residues 107 to 130 (SLDVSQESHDDEIDDQDSGEEVPI). Acidic residues predominate over residues 115–130 (HDDEIDDQDSGEEVPI).

It belongs to the RNA polymerase subunit omega family. As to quaternary structure, the RNAP catalytic core consists of 2 alpha, 1 beta, 1 beta' and 1 omega subunit. When a sigma factor is associated with the core the holoenzyme is formed, which can initiate transcription.

It catalyses the reaction RNA(n) + a ribonucleoside 5'-triphosphate = RNA(n+1) + diphosphate. Functionally, promotes RNA polymerase assembly. Latches the N- and C-terminal regions of the beta' subunit thereby facilitating its interaction with the beta and alpha subunits. The sequence is that of DNA-directed RNA polymerase subunit omega from Wolbachia pipientis subsp. Culex pipiens (strain wPip).